The primary structure comprises 123 residues: Keratin-associated protein 2-2 (123 aa).

An 11 X 5 AA repeats of C-C-[CDPQRWG]-[APRS]-[CIPSTVD] region spans residues 5-112 (CCGSTFSSLS…SVQSPCGQPT (108 aa)).

This sequence belongs to the KRTAP type 2 family. In terms of assembly, interacts with hair keratins.

In terms of biological role, in the hair cortex, hair keratin intermediate filaments are embedded in an interfilamentous matrix, consisting of hair keratin-associated proteins (KRTAP), which are essential for the formation of a rigid and resistant hair shaft through their extensive disulfide bond cross-linking with abundant cysteine residues of hair keratins. The matrix proteins include the high-sulfur and high-glycine-tyrosine keratins. The polypeptide is Keratin-associated protein 2-2 (KRTAP2-2) (Homo sapiens (Human)).